Reading from the N-terminus, the 185-residue chain is uncharacterized protein (185 aa).

5 helical membrane-spanning segments follow: residues 4–24, 35–55, 60–80, 123–143, and 152–172; these read IAWM…LGLA, GLLF…ATGV, GASA…SIAY, VLAY…INDS, and ILKL…SYFI.

The protein resides in the cell membrane. This is an uncharacterized protein from Bacillus subtilis (strain 168).